We begin with the raw amino-acid sequence, 290 residues long: Phosphoribosylaminoimidazole-succinocarboxamide synthase (290 aa).

This sequence belongs to the SAICAR synthetase family.

It catalyses the reaction 5-amino-1-(5-phospho-D-ribosyl)imidazole-4-carboxylate + L-aspartate + ATP = (2S)-2-[5-amino-1-(5-phospho-beta-D-ribosyl)imidazole-4-carboxamido]succinate + ADP + phosphate + 2 H(+). It participates in purine metabolism; IMP biosynthesis via de novo pathway; 5-amino-1-(5-phospho-D-ribosyl)imidazole-4-carboxamide from 5-amino-1-(5-phospho-D-ribosyl)imidazole-4-carboxylate: step 1/2. This chain is Phosphoribosylaminoimidazole-succinocarboxamide synthase, found in Haemophilus influenzae (strain PittGG).